Here is a 124-residue protein sequence, read N- to C-terminus: MMMGVELAFPKVVGKQVYGSLYECDEDVLKDTKRLEQIIKEAADIGNMNILDIKSWKIGEGVSVVAIILESHITIHTWPEYRFATVDVYSCGPHTSPLNAFRYIVEKLGAKRYTINEADRSSEF.

Serine 71 functions as the Schiff-base intermediate with substrate; via pyruvic acid in the catalytic mechanism. Position 71 is a pyruvic acid (Ser); by autocatalysis (serine 71). Histidine 76 (proton acceptor; for processing activity) is an active-site residue. Residue cysteine 91 is the Proton donor; for catalytic activity of the active site.

Belongs to the prokaryotic AdoMetDC family. Type 1 subfamily. In terms of assembly, heterotetramer of two alpha and two beta chains arranged as a dimer of alpha/beta heterodimers. The cofactor is pyruvate. Is synthesized initially as an inactive proenzyme. Formation of the active enzyme involves a self-maturation process in which the active site pyruvoyl group is generated from an internal serine residue via an autocatalytic post-translational modification. Two non-identical subunits are generated from the proenzyme in this reaction, and the pyruvate is formed at the N-terminus of the alpha chain, which is derived from the carboxyl end of the proenzyme. The post-translation cleavage follows an unusual pathway, termed non-hydrolytic serinolysis, in which the side chain hydroxyl group of the serine supplies its oxygen atom to form the C-terminus of the beta chain, while the remainder of the serine residue undergoes an oxidative deamination to produce ammonia and the pyruvoyl group blocking the N-terminus of the alpha chain.

It carries out the reaction S-adenosyl-L-methionine + H(+) = S-adenosyl 3-(methylsulfanyl)propylamine + CO2. Its pathway is amine and polyamine biosynthesis; S-adenosylmethioninamine biosynthesis; S-adenosylmethioninamine from S-adenosyl-L-methionine: step 1/1. Its activity is regulated as follows. Competitively inhibited by methylglyoxal bis-guanylhydrazone. Irreversibly inhibited by NaBH(4) in vitro. In terms of biological role, catalyzes the decarboxylation of S-adenosylmethionine to S-adenosylmethioninamine (dcAdoMet), the propylamine donor required for the synthesis of the polyamines spermine and spermidine from the diamine putrescine. Has no arginine decarboxylase (ArgDC) activity. In Saccharolobus solfataricus (strain ATCC 35092 / DSM 1617 / JCM 11322 / P2) (Sulfolobus solfataricus), this protein is S-adenosylmethionine decarboxylase proenzyme (speH).